The primary structure comprises 178 residues: Inorganic pyrophosphatase (178 aa).

Positions 29, 43, and 55 each coordinate substrate. Residues Asp65, Asp70, and Asp102 each coordinate Mg(2+). Residue Tyr141 coordinates substrate.

This sequence belongs to the PPase family. Homohexamer. Mg(2+) is required as a cofactor.

It localises to the cytoplasm. It catalyses the reaction diphosphate + H2O = 2 phosphate + H(+). In terms of biological role, catalyzes the hydrolysis of inorganic pyrophosphate (PPi) forming two phosphate ions. The polypeptide is Inorganic pyrophosphatase (Rickettsia typhi (strain ATCC VR-144 / Wilmington)).